Reading from the N-terminus, the 731-residue chain is Cell death abnormality protein 12 (731 aa).

Positions 339–485 (AEVQKILDIE…VVLEQLRHVL (147 aa)) constitute an ELMO domain. The 136-residue stretch at 544 to 679 (VRINHLNYLK…WLEGLAELIG (136 aa)) folds into the PH domain. The short motif at 715–718 (PEIP) is the SH3-binding element.

In terms of assembly, interacts with psr-1. Forms a ternary complex with ced-2 and ced-5.

It localises to the cytoplasm. In terms of biological role, involved in programmed apoptosis and necrosis. Required for the cell corpse engulfment process. Has roles in the formation of actin halos and distal tip cell migration. Negatively regulates the unc-6/Netrin receptor unc-5 to control distal tip cell migration along the anterior-posterior axis of the body. Plays no role in amphid axon outgrowth. The sequence is that of Cell death abnormality protein 12 from Caenorhabditis elegans.